Reading from the N-terminus, the 1016-residue chain is MNPSLVTAINAPISPSPRSPLLSHFLPTLPHRFSKSECLSRRRYRVSFPRSSAASSDQLSVSTQAKNPGIHGNKKELTGLQPIVEKMTPPVRLATSAVVLAASLATGYGLGLRLAGSRNIAFGGAAVAGAAGGAVVYALNSAVPEVAAISLHNYVAEFEDPASVTKDDVEKIADRYGVNKGDEAFQAEICDIYCRYVTSVLPTEGQSLKGDEVAKIVKFKNALGIDEPDAAAMHMEIGRRIFRQRLETGEREGDAEQRRAFMRLVYVSALVFGDASSFLLPWKRVLKVTDAQVEIAIRENAKQLYAERLKLVGRDINVENLVDLRKSQLSFKLSDELAEDLFREHTRKVVVENISSALSILKSRTRAAKSLASVVEELEKVLEFNNLLVSLKSHSEADQFARGVGPISLIGDESDFERRMDDLKLLYRAYVTDALSGGRLEENKLVAMSQLRNILGLGKREAEAISVDVTSKSYRKRLANAVSSGDLEAQDSKAKYLQKLCEELHFDAQKAGAIHEEIYRQKLQQCVTDGELSDDNVAALLRLRVMLCIPQQTVDTAHAEICGTIFEKVVRDAISSGVDGYDAETRKSVRKAAHGLRLSRETAMSIASKAVRRVFTNYIRRARAAENRTDSAKELKKMIAFNTLVVTEMVADIKGESSDKAPEEDPVQEKEEDDEDEEWGSLESLRKTRPDKELAEKMGKPGQTEITLKDDLPDRDRIDLYKTYLLYCVTGEVTRIPFGAQITTKRDDSEYLLLNQLGGILGLSSKEIVNIHVGLAEQAFRQQAEVILADGQLTKARVEQLDELQKQVGLPQPQAEKVIKNITTTKMANAIETAVNQGRLNIKQIRELKEANVSLDSMIAVSLREKLFKKTVSDIFSSGTGEFDETEVYQTIPSDLSIDVEKAKRVVHDLAQSRLSNSLVQAVALLRQRNSKGVVLSLNDLLACDKAVPAEPMSWEVSEELSDLYAIYSKSDPKPAPEKVLRLQYLLGIDDSTATALREMEDGALSSAAEEGNFVF.

A chloroplast-targeting transit peptide spans 1 to 51 (MNPSLVTAINAPISPSPRSPLLSHFLPTLPHRFSKSECLSRRRYRVSFPRS). Serine 52 carries the post-translational modification N-acetylserine. The Stromal portion of the chain corresponds to 52–95 (SAASSDQLSVSTQAKNPGIHGNKKELTGLQPIVEKMTPPVRLAT). The chain crosses the membrane as a helical span at residues 96–116 (SAVVLAASLATGYGLGLRLAG). Over 117-118 (SR) the chain is Chloroplast intermembrane. The helical transmembrane segment at 119 to 139 (NIAFGGAAVAGAAGGAVVYAL) threads the bilayer. Over 140–259 (NSAVPEVAAI…EREGDAEQRR (120 aa)) the chain is Stromal. Residues 260–280 (AFMRLVYVSALVFGDASSFLL) traverse the membrane as a helical segment. Residues 281 to 368 (PWKRVLKVTD…SILKSRTRAA (88 aa)) lie on the Chloroplast intermembrane side of the membrane. The helical transmembrane segment at 369–386 (KSLASVVEELEKVLEFNN) threads the bilayer. Residues 387 to 632 (LLVSLKSHSE…RAAENRTDSA (246 aa)) are Stromal-facing. Residues 633–650 (KELKKMIAFNTLVVTEMV) traverse the membrane as a helical segment. Topologically, residues 651-719 (ADIKGESSDK…DDLPDRDRID (69 aa)) are chloroplast intermembrane. A compositionally biased stretch (basic and acidic residues) spans 654 to 669 (KGESSDKAPEEDPVQE). A disordered region spans residues 654–708 (KGESSDKAPEEDPVQEKEEDDEDEEWGSLESLRKTRPDKELAEKMGKPGQTEITL). Residues 670-680 (KEEDDEDEEWG) are compositionally biased toward acidic residues. The segment covering 684–699 (SLRKTRPDKELAEKMG) has biased composition (basic and acidic residues). The chain crosses the membrane as a helical span at residues 720 to 736 (LYKTYLLYCVTGEVTRI). Residues 737-1016 (PFGAQITTKR…SAAEEGNFVF (280 aa)) lie on the Stromal side of the membrane.

It belongs to the chloroplast envelope anion channel-forming Tic110 (TC 1.A.18) family. Part of the Tic complex. Interacts with HSP70, HSP93 and TIC40. Interacts with the Toc complex components TOC33, TOC75 and TOC159. Interacts with LTD. As to expression, expressed in seedlings, flowers, leaves, stems and roots.

Its subcellular location is the plastid. It localises to the chloroplast inner membrane. Involved in protein precursor import into chloroplasts. Forms a voltage-dependent cation-selective channel at the inner envelope of chloroplasts, which specifically responds to a transit peptide. Associates with both the precursor and mature forms of the preprotein. The polypeptide is Protein TIC110, chloroplastic (TIC110) (Arabidopsis thaliana (Mouse-ear cress)).